The chain runs to 492 residues: Serine incorporator 4 (492 aa).

The next 10 membrane-spanning stretches (helical) occupy residues 59–79, 113–133, 148–168, 179–199, 219–239, 254–274, 281–301, 330–350, 421–441, and 464–484; these read YILLHVGASAICCLLLSKTVV, AVYRVCAGTATFHLLQAVLLV, SFWSLKLLFLLGLCVVAFCIP, IGICGGFTFILLQLVLITAFA, GVSLATLGFYSMAGVGAVLLF, LLSLHLCFCGLLSLLSIAPCI, SGLLQASIISCYIMYLTFSAL, IPDTSVAVFSAGIMYACVLFA, GFHFAFFLASLYVMVTLTNWF, and VASCWACVLLYLGLLLAPLLA.

It belongs to the TDE1 family.

Its subcellular location is the membrane. Its function is as follows. Incorporates a polar amino acid serine into membranes and facilitates the synthesis of two serine-derived lipids, phosphatidylserine and sphingolipids. In Mus musculus (Mouse), this protein is Serine incorporator 4 (Serinc4).